Consider the following 517-residue polypeptide: MTDWVLHHKVGPLDMTTRYIFPLLPLPFLPHSESKRAVCAPRCSAMRTARQFVQVALALCCFADIAFGIEVNCSLYASGIGKDGTSWVACPRNLKPVCGTDGSTYSNECGICLYNREHGANVEKEYDGECRPKHVTIDCSPYLQVVRDGNTMVACPRILKPVCGSDSFTYDNECGICAYNAEHHTNISKLHDGECKLEIGSVDCSKYPSTVSKDGRTLVACPRILSPVCGTDGFTYDNECGICAHNAEQRTHVSKKHDGKCRQEIPEIDCDQYPTRKTTGGKLLVRCPRILLPVCGTDGFTYDNECGICAHNAQHGTEVKKSHDGRCKERSTPLDCTQYLSNTQNGEAITACPFILQEVCGTDGVTYSNDCSLCAHNIELGTSVAKKHDGRCREEVPELDCSKYKTSTLKDGRQVVACTMIYDPVCATNGVTYASECTLCAHNLEQRTNLGKRKNGRCEEDITKEHCREFQKVSPICTMEYVPHCGSDGVTYSNRCFFCNAYVQSNRTLNLVSMAAC.

Kazal-like domains are found at residues 67 to 132 (FGIE…ECRP), 133 to 197 (KHVT…ECKL), 198 to 263 (EIGS…KCRQ), 264 to 329 (EIPE…RCKE), 330 to 394 (RSTP…RCRE), 395 to 460 (EVPE…RCEE), and 461 to 517 (DITK…MAAC). Asparagine 72 carries an N-linked (GlcNAc...) asparagine glycan. Intrachain disulfides connect cysteine 73-cysteine 112, cysteine 90-cysteine 109, cysteine 98-cysteine 130, cysteine 139-cysteine 177, cysteine 155-cysteine 174, cysteine 163-cysteine 195, cysteine 204-cysteine 243, cysteine 221-cysteine 240, cysteine 229-cysteine 261, cysteine 270-cysteine 309, cysteine 287-cysteine 306, cysteine 295-cysteine 327, cysteine 336-cysteine 374, cysteine 352-cysteine 371, cysteine 360-cysteine 392, cysteine 401-cysteine 440, cysteine 418-cysteine 437, cysteine 426-cysteine 458, cysteine 467-cysteine 499, cysteine 477-cysteine 496, and cysteine 485-cysteine 517. N-linked (GlcNAc...) asparagine glycosylation occurs at asparagine 186. Asparagine 506 is a glycosylation site (N-linked (GlcNAc...) asparagine).

Glycosylated. As to expression, expressed in oviduct (at protein level). Expressed in egg white (at protein level). Expressed in egg yolk plasma of non-fertilized eggs (at protein level). Expressed in the magnum of the oviduct (at protein level). Expressed in oviduct. Expressed in liver. Expressed in the cortico-medullary border region of the bursa of Fabricius by the bursal secretory dendritic-like cells. Highly expressed in the magnum of the oviduct, and at a lower level in uterus. Weakly expressed in white isthmus and very weakly in infundibulum. Not expressed in duodenum and kidney.

It is found in the secreted. In terms of biological role, serine protease inhibitor involved in antimicrobial egg defense preventing contamination of table eggs (non-fertilized eggs) and protecting the chick embryo (fertilized eggs). Inhibits trypsin, chymotrypsin, elastase, subtilisin and a proteinase of fungus Aspergillus oryzae. Inhibits calcium-activated potassium channels KCNMA1 (bovine) and slo (Drosophila). Has antibacterial activity against B.thuringiensis LMSA 3.06.004, but not against S.aureus CIP 103 811, P.aeruginosa PAO1, B.cereus ATCC6464 or B.subtilis ATCC 6633. The polypeptide is Ovoinhibitor (Gallus gallus (Chicken)).